The following is a 146-amino-acid chain: Snaclec 1 (146 aa).

The N-terminal stretch at 1–23 is a signal peptide; sequence MGRFIFMSFGLLVVFLSLSGTGA. 3 disulfide bridges follow: Cys25–Cys36, Cys53–Cys142, and Cys119–Cys134. A C-type lectin domain is found at 32–143; it reads YEGHCYRVFQ…CSRTYSFVCK (112 aa).

Belongs to the snaclec family. In terms of assembly, heterodimer; disulfide-linked. As to expression, expressed by the venom gland.

The protein resides in the secreted. In terms of biological role, interferes with one step of hemostasis (modulation of platelet aggregation, or coagulation cascade, for example). This is Snaclec 1 from Sistrurus catenatus edwardsii (Desert massasauga).